Reading from the N-terminus, the 534-residue chain is Cytokinin dehydrogenase 5 (534 aa).

An N-terminal signal peptide occupies residues Met1 to Gly20. In terms of domain architecture, FAD-binding PCMH-type spans Thr59–Ala243. FAD-binding residues include Ala93, Gly95, and Gly97. His98 is modified (pros-8alpha-FAD histidine). FAD is bound by residues Ser99 and Gln103. Asn152 carries N-linked (GlcNAc...) asparagine glycosylation. Residues Asp167, Ser172, Ser178, Ile182, and Ile233 each coordinate FAD. The N-linked (GlcNAc...) asparagine glycan is linked to Asn256. FAD contacts are provided by Tyr484 and Gln522.

Belongs to the oxygen-dependent FAD-linked oxidoreductase family. Monomer. FAD is required as a cofactor. Expressed in inflorescence meristems.

The protein resides in the secreted. It localises to the extracellular space. It catalyses the reaction N(6)-dimethylallyladenine + A + H2O = 3-methyl-2-butenal + adenine + AH2. Its function is as follows. Catalyzes the oxidation of cytokinins, a family of N(6)-substituted adenine derivatives that are plant hormones, where the substituent is an isopentenyl group. This chain is Cytokinin dehydrogenase 5 (CKX5), found in Oryza sativa subsp. japonica (Rice).